Consider the following 534-residue polypeptide: Invertase (534 aa).

Positions 1–21 are cleaved as a signal peptide; sequence MKITTLVASILMSVLLEPVIA. Substrate is bound by residues 46–49 and glutamine 67; that span reads WLND. Aspartate 49 is a catalytic residue. Asparagine 71 is a glycosylation site (N-linked (GlcNAc...) asparagine). 109–110 contacts substrate; the sequence is FS. N-linked (GlcNAc...) asparagine glycans are attached at residues asparagine 118, asparagine 119, and asparagine 172. Residue 177–178 coordinates substrate; that stretch reads RD. Asparagine 218 carries an N-linked (GlcNAc...) asparagine glycan. Substrate-binding residues include glutamate 229 and tryptophan 313. N-linked (GlcNAc...) asparagine glycosylation is found at asparagine 375, asparagine 381, asparagine 392, and asparagine 420.

It belongs to the glycosyl hydrolase 32 family.

It carries out the reaction Hydrolysis of terminal non-reducing beta-D-fructofuranoside residues in beta-D-fructofuranosides.. This is Invertase (INV) from Debaryomyces hansenii (strain ATCC 36239 / CBS 767 / BCRC 21394 / JCM 1990 / NBRC 0083 / IGC 2968) (Yeast).